The primary structure comprises 160 residues: Ribosomal RNA large subunit methyltransferase H (160 aa).

S-adenosyl-L-methionine contacts are provided by Leu-76 and Gly-108.

It belongs to the RNA methyltransferase RlmH family. In terms of assembly, homodimer.

It localises to the cytoplasm. It catalyses the reaction pseudouridine(1915) in 23S rRNA + S-adenosyl-L-methionine = N(3)-methylpseudouridine(1915) in 23S rRNA + S-adenosyl-L-homocysteine + H(+). Functionally, specifically methylates the pseudouridine at position 1915 (m3Psi1915) in 23S rRNA. This chain is Ribosomal RNA large subunit methyltransferase H, found in Rhodopseudomonas palustris (strain HaA2).